A 234-amino-acid chain; its full sequence is MSLLAQLDQRIRHHGGLIVSCQPVPGSPLDNPAIVAAMALAAEQAGAVALRIEGLANLQAVRPLVTVPVIGLIKRDLPDSPVRITPWLEDIDALAQGGADIIAIDGTQRQRPASVSALLAEIHQLGKVAMADCSSLDDALECWQLGAEIVGTTLSGYTAEETPDEPDLALVQCLSVAGCRVIAEGRYNTPAQAAEAMRCGAWAVTVGSAITRLEHICGWYNTALKAAVCPANEQ.

The protein belongs to the NanE family.

The enzyme catalyses an N-acyl-D-glucosamine 6-phosphate = an N-acyl-D-mannosamine 6-phosphate. Its pathway is amino-sugar metabolism; N-acetylneuraminate degradation; D-fructose 6-phosphate from N-acetylneuraminate: step 3/5. In terms of biological role, converts N-acetylmannosamine-6-phosphate (ManNAc-6-P) to N-acetylglucosamine-6-phosphate (GlcNAc-6-P). The chain is Putative N-acetylmannosamine-6-phosphate 2-epimerase from Klebsiella pneumoniae subsp. pneumoniae (strain ATCC 700721 / MGH 78578).